Reading from the N-terminus, the 252-residue chain is 1-(5-phosphoribosyl)-5-[(5-phosphoribosylamino)methylideneamino] imidazole-4-carboxamide isomerase (252 aa).

D10 serves as the catalytic Proton acceptor. The active-site Proton donor is D129.

Belongs to the HisA/HisF family.

Its subcellular location is the cytoplasm. It carries out the reaction 1-(5-phospho-beta-D-ribosyl)-5-[(5-phospho-beta-D-ribosylamino)methylideneamino]imidazole-4-carboxamide = 5-[(5-phospho-1-deoxy-D-ribulos-1-ylimino)methylamino]-1-(5-phospho-beta-D-ribosyl)imidazole-4-carboxamide. It participates in amino-acid biosynthesis; L-histidine biosynthesis; L-histidine from 5-phospho-alpha-D-ribose 1-diphosphate: step 4/9. This Frankia casuarinae (strain DSM 45818 / CECT 9043 / HFP020203 / CcI3) protein is 1-(5-phosphoribosyl)-5-[(5-phosphoribosylamino)methylideneamino] imidazole-4-carboxamide isomerase.